The primary structure comprises 298 residues: GTPase Era (298 aa).

In terms of domain architecture, Era-type G spans 8–176 (RSGSVAVIGR…VSDLLKLVPE (169 aa)). Positions 16–23 (GRPNVGKS) are G1. 16–23 (GRPNVGKS) contacts GTP. Residues 42–46 (QTTRH) are G2. Residues 63–66 (DTPG) form a G3 region. Residues 63–67 (DTPGL) and 125–128 (NKVD) contribute to the GTP site. The G4 stretch occupies residues 125–128 (NKVD). Positions 155–157 (VSA) are G5. A KH type-2 domain is found at 199–283 (VREQLMRQLG…FLETWVRVRE (85 aa)).

The protein belongs to the TRAFAC class TrmE-Era-EngA-EngB-Septin-like GTPase superfamily. Era GTPase family. As to quaternary structure, monomer.

The protein resides in the cytoplasm. It is found in the cell inner membrane. An essential GTPase that binds both GDP and GTP, with rapid nucleotide exchange. Plays a role in 16S rRNA processing and 30S ribosomal subunit biogenesis and possibly also in cell cycle regulation and energy metabolism. This is GTPase Era from Xanthomonas campestris pv. campestris (strain 8004).